A 623-amino-acid polypeptide reads, in one-letter code: Putative chaperone protein ClpB2, chloroplastic (623 aa).

In terms of domain architecture, Clp R spans 1–123 (MNDLKFDPNV…KSEVEKLRGE (123 aa)). Repeat stretches follow at residues 6–71 (FDPN…NQSL) and 77–123 (RNLG…LRGE). An i region spans residues 129–375 (LKTYGTDLVE…HVKAQLDIQP (247 aa)). 172–179 (GEPGVGKT) contributes to the ATP binding site. A coiled-coil region spans residues 368–462 (KAQLDIQPEE…LQEAERQHDV (95 aa)). 571–578 (GPTGVGKT) serves as a coordination point for ATP.

This sequence belongs to the ClpA/ClpB family.

This chain is Putative chaperone protein ClpB2, chloroplastic (CLPB2), found in Arabidopsis thaliana (Mouse-ear cress).